Consider the following 241-residue polypeptide: Protein unc-119 homolog B-B (241 aa).

Residues 1–46 (MSGSNREAALAGQPKDERKKSGGGVINRLKARRVQGKESGTSDQSS) are disordered. Tyr-132 provides a ligand contact to tetradecanoate.

Belongs to the PDE6D/unc-119 family.

It is found in the cell projection. The protein localises to the cilium. Its function is as follows. Myristoyl-binding protein that acts as a cargo adapter: specifically binds the myristoyl moiety of a subset of N-terminally myristoylated proteins and is required for their localization. Plays a key role in localization of proteins to the primary cilium membrane. The sequence is that of Protein unc-119 homolog B-B (unc119b-b) from Xenopus laevis (African clawed frog).